We begin with the raw amino-acid sequence, 262 residues long: Type III pantothenate kinase (262 aa).

6–13 (DVGNTNTV) serves as a coordination point for ATP. Residues Y101 and 108–111 (GADR) each bind substrate. D110 functions as the Proton acceptor in the catalytic mechanism. D130 contacts K(+). Position 133 (T133) interacts with ATP. T186 provides a ligand contact to substrate.

It belongs to the type III pantothenate kinase family. As to quaternary structure, homodimer. The cofactor is NH4(+). K(+) is required as a cofactor.

The protein localises to the cytoplasm. The enzyme catalyses (R)-pantothenate + ATP = (R)-4'-phosphopantothenate + ADP + H(+). Its pathway is cofactor biosynthesis; coenzyme A biosynthesis; CoA from (R)-pantothenate: step 1/5. In terms of biological role, catalyzes the phosphorylation of pantothenate (Pan), the first step in CoA biosynthesis. This Desulforapulum autotrophicum (strain ATCC 43914 / DSM 3382 / VKM B-1955 / HRM2) (Desulfobacterium autotrophicum) protein is Type III pantothenate kinase.